The following is an 87-amino-acid chain: Small ribosomal subunit protein bS20 (87 aa).

The tract at residues 1–22 is disordered; it reads MANSAQARKRARQSLKARAHNA. Over residues 7–19 the composition is skewed to basic residues; the sequence is ARKRARQSLKARA.

It belongs to the bacterial ribosomal protein bS20 family.

In terms of biological role, binds directly to 16S ribosomal RNA. This chain is Small ribosomal subunit protein bS20, found in Laribacter hongkongensis (strain HLHK9).